We begin with the raw amino-acid sequence, 435 residues long: Putative magnesium transporter MRS2-H (435 aa).

Residues 19-54 are disordered; sequence FSSSPESRRCRSVHRVPSRPRPPLAPPARVMGKGNS. 2 consecutive transmembrane segments (helical) span residues 369–389 and 408–428; these read LTLIIASFGIAINTFIAAAFA and FVGATSFLCMSIVILLFTYAW.

This sequence belongs to the CorA metal ion transporter (MIT) (TC 1.A.35.5) family.

The protein localises to the membrane. Putative magnesium transporter. In Oryza sativa subsp. indica (Rice), this protein is Putative magnesium transporter MRS2-H (MRS2-H).